Reading from the N-terminus, the 445-residue chain is Na(+)-translocating NADH-quinone reductase subunit A (445 aa).

Belongs to the NqrA family. As to quaternary structure, composed of six subunits; NqrA, NqrB, NqrC, NqrD, NqrE and NqrF.

The catalysed reaction is a ubiquinone + n Na(+)(in) + NADH + H(+) = a ubiquinol + n Na(+)(out) + NAD(+). Its function is as follows. NQR complex catalyzes the reduction of ubiquinone-1 to ubiquinol by two successive reactions, coupled with the transport of Na(+) ions from the cytoplasm to the periplasm. NqrA to NqrE are probably involved in the second step, the conversion of ubisemiquinone to ubiquinol. The protein is Na(+)-translocating NADH-quinone reductase subunit A of Pseudomonas aeruginosa (strain UCBPP-PA14).